Consider the following 263-residue polypeptide: Triosephosphate isomerase (263 aa).

10-12 (NWK) serves as a coordination point for substrate. The active-site Electrophile is the H104. The active-site Proton acceptor is the E176. Residues G182, S221, and 242-243 (GG) contribute to the substrate site.

Belongs to the triosephosphate isomerase family. In terms of assembly, homodimer.

Its subcellular location is the cytoplasm. The catalysed reaction is D-glyceraldehyde 3-phosphate = dihydroxyacetone phosphate. The protein operates within carbohydrate biosynthesis; gluconeogenesis. It functions in the pathway carbohydrate degradation; glycolysis; D-glyceraldehyde 3-phosphate from glycerone phosphate: step 1/1. Its function is as follows. Involved in the gluconeogenesis. Catalyzes stereospecifically the conversion of dihydroxyacetone phosphate (DHAP) to D-glyceraldehyde-3-phosphate (G3P). This chain is Triosephosphate isomerase, found in Haemophilus influenzae (strain 86-028NP).